The following is a 409-amino-acid chain: Ribose-phosphate pyrophosphokinase 1 (409 aa).

Mg(2+) contacts are provided by Asp-128, His-130, and Asp-143. Ser-199 carries the post-translational modification Phosphoserine.

Belongs to the ribose-phosphate pyrophosphokinase family.

Its subcellular location is the cytoplasm. It carries out the reaction D-ribose 5-phosphate + ATP = 5-phospho-alpha-D-ribose 1-diphosphate + AMP + H(+). It functions in the pathway metabolic intermediate biosynthesis; 5-phospho-alpha-D-ribose 1-diphosphate biosynthesis; 5-phospho-alpha-D-ribose 1-diphosphate from D-ribose 5-phosphate (route I): step 1/1. Functionally, 5-phosphoribose 1-diphosphate synthase involved in nucleotide, histidine, and tryptophan biosynthesis. Active in heteromultimeric complexes with other 5-phosphoribose 1-diphosphate synthases. The chain is Ribose-phosphate pyrophosphokinase 1 from Schizosaccharomyces pombe (strain 972 / ATCC 24843) (Fission yeast).